Reading from the N-terminus, the 524-residue chain is Serine/threonine-protein kinase PAK 2 (524 aa).

A disordered region spans residues 1-81 (MSDNGELEDK…PEISPPSDFE (81 aa)). S2 carries the post-translational modification N-acetylserine. Phosphoserine is present on residues S2, S20, S55, and S58. T60 carries the post-translational modification Phosphothreonine. N6-acetyllysine is present on K62. S64 bears the Phosphoserine mark. A compositionally biased stretch (basic and acidic residues) spans 67-81 (KEKERPEISPPSDFE). Positions 69-112 (KERPEISPPSDFEHTIHVGFDAVTGEFTGMPEQWARLLQTSNIT) are GTPase-binding. The interval 69-137 (KERPEISPPS…KFYDSNTVKQ (69 aa)) is autoregulatory region. A CRIB domain is found at 74 to 87 (ISPPSDFEHTIHVG). A linker region spans residues 88 to 248 (FDAVTGEFTG…IVSIGDPKKK (161 aa)). N6-acetyllysine is present on K128. T134 carries the phosphothreonine modification. Residue Y139 is modified to Phosphotyrosine. S141 bears the Phosphoserine mark. T143 carries the phosphothreonine modification. Position 152 is a phosphoserine (S152). Phosphothreonine occurs at positions 159 and 169. Over residues 169–178 (TEEDDDDEEA) the composition is skewed to acidic residues. The tract at residues 169 to 188 (TEEDDDDEEAAPPVIAPRPD) is disordered. A Phosphoserine modification is found at S197. The segment at 204–228 (APVGDSHVDSGAKSSDKQKKKTKMT) is disordered. Basic and acidic residues predominate over residues 209 to 228 (SHVDSGAKSSDKQKKKTKMT). Residues 245-251 (PKKKYTR) carry the Nuclear localization signal motif. The Protein kinase domain maps to 249–500 (YTRYEKIGQG…AKELLQHPFL (252 aa)). Residues 255 to 263 (IGQGASGTV) and K278 contribute to the ATP site. The active-site Proton acceptor is the D368. T402 carries the post-translational modification Phosphothreonine; by autocatalysis.

Interacts tightly with GTP-bound but not GDP-bound CDC42/p21 and RAC1. Interacts with SH3MD4. Interacts with SCRIB. Interacts with ARHGEF7 and GIT1. PAK-2p34 interacts with ARHGAP10. Interacts with RAC1. In terms of processing, full-length PAK2 is autophosphorylated when activated by CDC42/p21. Following cleavage, both peptides, PAK-2p27 and PAK-2p34, become highly autophosphorylated. Autophosphorylation of PAK-2p27 can occur in the absence of any effectors and is dependent on phosphorylation of Thr-402, because PAK-2p27 is acting as an exogenous substrate. During apoptosis proteolytically cleaved by caspase-3 or caspase-3-like proteases to yield active PAK-2p34. Post-translationally, ubiquitinated, leading to its proteasomal degradation.

It is found in the cytoplasm. The protein localises to the nucleus. It localises to the perinuclear region. The protein resides in the membrane. It catalyses the reaction L-seryl-[protein] + ATP = O-phospho-L-seryl-[protein] + ADP + H(+). The catalysed reaction is L-threonyl-[protein] + ATP = O-phospho-L-threonyl-[protein] + ADP + H(+). With respect to regulation, activated by binding small G proteins. Binding of GTP-bound CDC42 or RAC1 to the autoregulatory region releases monomers from the autoinhibited dimer, enables phosphorylation of Thr-402 and allows the kinase domain to adopt an active structure. Following caspase cleavage, autophosphorylated PAK-2p34 is constitutively active. Serine/threonine protein kinase that plays a role in a variety of different signaling pathways including cytoskeleton regulation, cell motility, cell cycle progression, apoptosis or proliferation. Acts as a downstream effector of the small GTPases CDC42 and RAC1. Activation by the binding of active CDC42 and RAC1 results in a conformational change and a subsequent autophosphorylation on several serine and/or threonine residues. Full-length PAK2 stimulates cell survival and cell growth. Phosphorylates MAPK4 and MAPK6 and activates the downstream target MAPKAPK5, a regulator of F-actin polymerization and cell migration. Phosphorylates JUN and plays an important role in EGF-induced cell proliferation. Phosphorylates many other substrates including histone H4 to promote assembly of H3.3 and H4 into nucleosomes, BAD, ribosomal protein S6, or MBP. Phosphorylates CASP7, thereby preventing its activity. Additionally, associates with ARHGEF7 and GIT1 to perform kinase-independent functions such as spindle orientation control during mitosis. On the other hand, apoptotic stimuli such as DNA damage lead to caspase-mediated cleavage of PAK2, generating PAK-2p34, an active p34 fragment that translocates to the nucleus and promotes cellular apoptosis involving the JNK signaling pathway. Caspase-activated PAK2 phosphorylates MKNK1 and reduces cellular translation. The polypeptide is Serine/threonine-protein kinase PAK 2 (PAK2) (Oryctolagus cuniculus (Rabbit)).